A 568-amino-acid polypeptide reads, in one-letter code: Sphingosine-1-phosphate lyase 1 (568 aa).

At 1-41 (MPSTDLLTLKAFEPYLEILEVYSTKAKNYVNGHCTKYEPWQ) the chain is on the lumenal side. Residues 42 to 62 (LIAWSVVWTLLIVWGYEFVFQ) traverse the membrane as a helical; Signal-anchor for type III membrane protein segment. Over 63-568 (PESLWSRFKK…SQMNGSPKPH (506 aa)) the chain is Cytoplasmic. An N6-(pyridoxal phosphate)lysine; alternate modification is found at K353. An N6-acetyllysine; alternate modification is found at K353. 3'-nitrotyrosine is present on residues Y356 and Y366. Position 564 is a phosphoserine (S564).

The protein belongs to the group II decarboxylase family. Sphingosine-1-phosphate lyase subfamily. As to quaternary structure, homodimer. It depends on pyridoxal 5'-phosphate as a cofactor.

It localises to the endoplasmic reticulum membrane. It carries out the reaction sphinganine 1-phosphate = hexadecanal + phosphoethanolamine. The catalysed reaction is sphing-4-enine 1-phosphate = (2E)-hexadecenal + phosphoethanolamine. It functions in the pathway lipid metabolism; sphingolipid metabolism. Its function is as follows. Cleaves phosphorylated sphingoid bases (PSBs), such as sphingosine-1-phosphate, into fatty aldehydes and phosphoethanolamine. Elevates stress-induced ceramide production and apoptosis. Required for global lipid homeostasis in liver and cholesterol homeostasis in fibroblasts. Involved in the regulation of pro-inflammatory response and neutrophil trafficking. Modulates neuronal autophagy via phosphoethanolamine production which regulates accumulation of aggregate-prone proteins such as APP. Seems to play a role in establishing neuronal contact sites and axonal maintenance. In Pongo abelii (Sumatran orangutan), this protein is Sphingosine-1-phosphate lyase 1.